The following is a 182-amino-acid chain: GTP cyclohydrolase 1 (182 aa).

The Zn(2+) site is built by C73, H76, and C144.

Belongs to the GTP cyclohydrolase I family. In terms of assembly, homomer.

It carries out the reaction GTP + H2O = 7,8-dihydroneopterin 3'-triphosphate + formate + H(+). Its pathway is cofactor biosynthesis; 7,8-dihydroneopterin triphosphate biosynthesis; 7,8-dihydroneopterin triphosphate from GTP: step 1/1. The polypeptide is GTP cyclohydrolase 1 (Hydrogenobaculum sp. (strain Y04AAS1)).